A 296-amino-acid chain; its full sequence is Endochitinase 3 (296 aa).

A GH18 domain is found at 12 to 296 (HKLTVYWGAE…VKNGQLPEED (285 aa)). Asn32 and Asn152 each carry an N-linked (GlcNAc...) asparagine glycan. The active-site Proton donor is the Glu153. Asn228 carries an N-linked (GlcNAc...) asparagine glycan.

The protein belongs to the glycosyl hydrolase 18 family. Chitinase class III subfamily.

The protein resides in the secreted. The enzyme catalyses Random endo-hydrolysis of N-acetyl-beta-D-glucosaminide (1-&gt;4)-beta-linkages in chitin and chitodextrins.. In terms of biological role, secreted chitinase involved in the degradation of chitin, a component of the cell walls of fungi and exoskeletal elements of some animals (including worms and arthropods). Participates in the infection process and directly acts in the penetration process of the host cuticle. Involved in heat-shock adaptation. This chain is Endochitinase 3 (chi3), found in Metarhizium anisopliae (Entomophthora anisopliae).